We begin with the raw amino-acid sequence, 366 residues long: Putative neutrophil cytosol factor 1C (366 aa).

The region spanning 1-101 is the PX domain; the sequence is MYMFLVKWQD…DFFKVRPDDL (101 aa). SH3 domains lie at 132-191 and 202-261; these read IILQ…PLDS and YAGE…KSGQ. Positions 261–366 are disordered; sequence QDVSQAQRQI…STKRKLASAV (106 aa). Phosphoserine occurs at positions 279 and 280. Over residues 285–294 the composition is skewed to basic residues; the sequence is HSIHQRSRKR. Phosphoserine occurs at positions 296, 304, 321, and 324.

It is found in the cytoplasm. Its function is as follows. May be required for activation of the latent NADPH oxidase (necessary for superoxide production). The chain is Putative neutrophil cytosol factor 1C (NCF1C) from Homo sapiens (Human).